The chain runs to 106 residues: Small ribosomal subunit protein uS10 (106 aa).

The protein belongs to the universal ribosomal protein uS10 family. Part of the 30S ribosomal subunit.

Functionally, involved in the binding of tRNA to the ribosomes. This Synechococcus sp. (strain CC9311) protein is Small ribosomal subunit protein uS10.